The sequence spans 257 residues: Putative transcription factor R430 (257 aa).

2 disordered regions span residues 1 to 35 and 58 to 77; these read MEKF…DNNS and SLKS…PNKS. The segment covering 7–25 has biased composition (low complexity); it reads TDNTTDNTTDNTTDNTTDN. Residues 26–35 are compositionally biased toward basic and acidic residues; the sequence is TTDKLTDNNS.

Belongs to the nucleo-cytoplasmic large DNA viruses (NCLDVs) VLTF-3 family.

Putative transcription factor. This chain is Putative transcription factor R430, found in Acanthamoeba polyphaga (Amoeba).